Reading from the N-terminus, the 908-residue chain is Chloride channel protein 2 (908 aa).

Residues 1–95 (MAAATAAAAA…RCHKFLVSRV (95 aa)) lie on the Cytoplasmic side of the membrane. An essential for channel gating by both voltage and cell volume region spans residues 24 to 42 (QYEQTLMYGRYTQELGAFA). A Phosphothreonine modification is found at Thr28. The modulates channel gating by both voltage and cell volume stretch occupies residues 44 to 57 (EEAARIRLGGPEPW). Transmembrane regions (helical) follow at residues 96–129 (GEDW…AQQW) and 138–163 (ILLQ…TQIL). The Selectivity filter part_1 motif lies at 169-173 (GSGIP). Ser170 is a chloride binding site. Residues 172 to 179 (IPEMKTIL) constitute an intramembrane region (helical). 2 helical membrane passes run 188–206 (LTLK…ALGS) and 213–231 (EGPF…SKFL). The Selectivity filter part_2 signature appears at 211 to 215 (GKEGP). Intramembrane regions (helical) lie at residues 247-259 (MLAA…VGCC) and 263-271 (PIGGVLFSI). Transmembrane regions (helical) follow at residues 283–303 (YWRG…LAVW), 329–357 (LPAF…VQVM), 366–385 (FLMR…ISTL), 437–457 (ANVF…SALA), and 465–488 (GAFM…MAAW). The Selectivity filter part_3 motif lies at 465 to 469 (GAFMP). Phe467 contributes to the chloride binding site. Positions 505 to 519 (GGYAVVGAAALAGAV) form an intramembrane region, helical. The note=Loop between two helices intramembrane region spans 520-521 (TH). The segment at residues 522-533 (TVSTAVIVFELT) is an intramembrane region (helical). The note=Loop between two helices intramembrane region spans 534–538 (GQIAH). A helical transmembrane segment spans residues 539-556 (ILPVMIAVILANAVAQSL). At 557–908 (QPSLYDSIIR…TPSDSDDKCQ (352 aa)) the chain is on the cytoplasmic side. Tyr561 contributes to the chloride binding site. Positions 592-650 (MVRDVPHVALSCTFRDLRLALHRTKGRMLALVESPESMILLGSIERSQVVALLGAQLSP) constitute a CBS 1 domain. A compositionally biased stretch (basic residues) spans 653–662 (RRQHMQKLRK). The interval 653-722 (RRQHMQKLRK…NSTSLQEGTT (70 aa)) is disordered. Low complexity predominate over residues 666-680 (SPPSDQESPPSSETS). Polar residues predominate over residues 681–690 (IRFQVNTEDS). The span at 698 to 707 (QTHKPLKPAL) shows a compositional bias: basic residues. Positions 711–722 (PSNSTSLQEGTT) are enriched in polar residues. Ser768 is modified (phosphoserine). The CBS 2 domain occupies 800-860 (IDPAPFQLVE…GSVTAQGVKV (61 aa)). A Basolateral membrane sorting motif is present at residues 822-823 (LL). The tract at residues 866–908 (SFRDSATSSSDTETTEVHALWGPRSRHGLPREGTPSDSDDKCQ) is disordered.

Belongs to the chloride channel (TC 2.A.49) family. ClC-2/CLCN2 subfamily. In terms of assembly, homodimer. Interacts with auxiliary subunit HEPACAM. In terms of processing, phosphorylated. Activated by dephosphorylation. Expressed in the adrenal gland and brain. Expressed in intestinal epithelium (at protein level). Expressed in salivary gland (at protein level).

It is found in the cell membrane. The protein resides in the myelin membrane. Its subcellular location is the basolateral cell membrane. The protein localises to the cell projection. It localises to the dendritic spine membrane. It is found in the axon. The enzyme catalyses chloride(in) = chloride(out). The catalysed reaction is thiocyanate(in) = thiocyanate(out). It catalyses the reaction bromide(in) = bromide(out). It carries out the reaction nitrate(in) = nitrate(out). The enzyme catalyses iodide(out) = iodide(in). With respect to regulation, common gate kinetics are down-regulated by intracellular ATP. Inhibited by AK-42, a derivative of meclofenamate. Inhibited by Cd(2+). Inhibited by Zn(2+) and PKC activation. Inhibited at acidic pH. CCLN2:HEPACAM channel conductance is up-regulated upon hypo-osmolarity. Functionally, voltage-gated and osmosensitive chloride channel. Forms a homodimeric channel where each subunit has its own ion conduction pathway. Conducts double-barreled currents controlled by two types of gates, two fast glutamate gates that control each subunit independently and a slow common gate that opens and shuts off both subunits simultaneously. Displays inward rectification currents activated upon membrane hyperpolarization and extracellular hypotonicity. Contributes to chloride conductance involved in neuron excitability. In hippocampal neurons, generates a significant part of resting membrane conductance and provides an additional chloride efflux pathway to prevent chloride accumulation in dendrites upon GABA receptor activation. In glia, associates with the auxiliary subunit HEPACAM/GlialCAM at astrocytic processes and myelinated fiber tracts where it may regulate transcellular chloride flux buffering extracellular chloride and potassium concentrations. Regulates aldosterone production in adrenal glands. The opening of CLCN2 channels at hyperpolarized membrane potentials in the glomerulosa causes cell membrane depolarization, activation of voltage-gated calcium channels and increased expression of aldosterone synthase, the rate-limiting enzyme for aldosterone biosynthesis. Contributes to chloride conductance in retinal pigment epithelium involved in phagocytosis of shed photoreceptor outer segments and photoreceptor renewal. Conducts chloride currents at the basolateral membrane of epithelial cells with a role in chloride reabsorption rather than secretion. Permeable to small monovalent anions with chloride &gt; thiocyanate &gt; bromide &gt; nitrate &gt; iodide ion selectivity. This Mus musculus (Mouse) protein is Chloride channel protein 2 (Clcn2).